A 122-amino-acid chain; its full sequence is Large ribosomal subunit protein bL12 (122 aa).

The protein belongs to the bacterial ribosomal protein bL12 family. As to quaternary structure, homodimer. Part of the ribosomal stalk of the 50S ribosomal subunit. Forms a multimeric L10(L12)X complex, where L10 forms an elongated spine to which 2 to 4 L12 dimers bind in a sequential fashion. Binds GTP-bound translation factors.

In terms of biological role, forms part of the ribosomal stalk which helps the ribosome interact with GTP-bound translation factors. Is thus essential for accurate translation. This Blochmanniella pennsylvanica (strain BPEN) protein is Large ribosomal subunit protein bL12.